Consider the following 330-residue polypeptide: Methylthioribose-1-phosphate isomerase (330 aa).

Residues 49-51 (RGA), Arg-83, and Gln-179 each bind substrate. The active-site Proton donor is the Asp-220. 230–231 (NK) provides a ligand contact to substrate.

The protein belongs to the eIF-2B alpha/beta/delta subunits family. MtnA subfamily.

It carries out the reaction 5-(methylsulfanyl)-alpha-D-ribose 1-phosphate = 5-(methylsulfanyl)-D-ribulose 1-phosphate. It participates in amino-acid biosynthesis; L-methionine biosynthesis via salvage pathway; L-methionine from S-methyl-5-thio-alpha-D-ribose 1-phosphate: step 1/6. Catalyzes the interconversion of methylthioribose-1-phosphate (MTR-1-P) into methylthioribulose-1-phosphate (MTRu-1-P). This is Methylthioribose-1-phosphate isomerase from Thermus thermophilus (strain ATCC BAA-163 / DSM 7039 / HB27).